The chain runs to 61 residues: Protein TfaX (61 aa).

This sequence belongs to the tfa family.

Functionally, might play a role in cell growth during glycolysis. This is Protein TfaX (tfaX) from Escherichia coli (strain K12).